Consider the following 60-residue polypeptide: UPF0434 protein Spro_1718 (60 aa).

Belongs to the UPF0434 family.

This is UPF0434 protein Spro_1718 from Serratia proteamaculans (strain 568).